We begin with the raw amino-acid sequence, 359 residues long: Proton-coupled zinc antiporter SLC30A2 (359 aa).

Residues 1 to 56 (MASRSFFGALWKSEASRIPPVNLPSVELAVQSNHYCHAQKDSGSHPNSEKQRARRK) are Cytoplasmic-facing. The short motif at 34–37 (HYCH) is the Mitochondrial localization signal element. Residue Cys36 participates in Zn(2+) binding. The chain crosses the membrane as a helical span at residues 57-77 (LYVASAICLVFMIGEIIGGYL). Residues 78 to 86 (AQSLAIMTD) lie on the Lumenal side of the membrane. Residues 87–107 (AAHLLTDFASMLISLFSLWVS) form a helical membrane-spanning segment. The Zn(2+) site is built by His89 and Asp93. Topologically, residues 108-123 (SRPATKTMNFGWQRAE) are cytoplasmic. Residues 124–144 (ILGALLSVLSIWVVTGVLVYL) traverse the membrane as a helical segment. Residues 145–159 (AVQRLISGDYEIKGD) are Lumenal-facing. The helical transmembrane segment at 160–180 (TMLITSGCAVAVNIIMGLALH) threads the bilayer. Over 181–207 (QSGHGHSHGHSHEDSSQQQQNPSVRAA) the chain is Cytoplasmic. The chain crosses the membrane as a helical span at residues 208 to 228 (FIHVVGDLLQSVGVLVAAYII). 2 residues coordinate Zn(2+): His210 and Asp214. Topologically, residues 229–236 (YFKPEYKY) are lumenal. A helical membrane pass occupies residues 237–257 (VDPICTFLFSILVLGTTLTIL). Topologically, residues 258 to 291 (RDVILVLMEGTPKGVDFTTVKNLLLSVDGVEALH) are cytoplasmic. The Lysosomal targeting motif signature appears at 281-282 (LL). A Phosphoserine modification is found at Ser283. Zn(2+)-binding residues include His291, His308, and Glu342. A helical transmembrane segment spans residues 292–312 (SLHIWALTVAQPVLSVHIAIA). Over 313 to 359 (QNVDAQAVLKVARDRLQGKFNFHTMTIQIESYSEDMKSCQECQGPSE) the chain is Lumenal.

Belongs to the cation diffusion facilitator (CDF) transporter (TC 2.A.4) family. SLC30A subfamily. Homodimer. Interacts (via lysosomal targeting motif) with AP3D1; in AP-3-mediated transport to lysosomes. Interacts with TMEM163. In terms of processing, phosphorylated at Ser-283. Phosphorylation at Ser-283 prevents localization to lysosomes. Dephosphorylation of Ser-283 which triggers localization to lysosomes, accumulation of zinc into lysosomes and lysosomal-mediated cell death is induced by TNF-alpha. In terms of tissue distribution, detected in intestine, kidney, seminal vesicles and testis.

The protein resides in the cytoplasmic vesicle. It localises to the secretory vesicle membrane. It is found in the zymogen granule membrane. The protein localises to the endosome membrane. Its subcellular location is the lysosome membrane. The protein resides in the mitochondrion inner membrane. It catalyses the reaction Zn(2+)(in) + 2 H(+)(out) = Zn(2+)(out) + 2 H(+)(in). Functionally, electroneutral proton-coupled antiporter concentrating zinc ions into a variety of intracellular organelles including endosomes, zymogen granules and mitochondria. Thereby, plays a crucial role in cellular zinc homeostasis to confer upon cells protection against its potential cytotoxicity. Regulates the zinc concentration of milk, through the transport of zinc ions into secretory vesicles of mammary cells. By concentrating zinc ions into lysosomes participates to lysosomal-mediated cell death during early mammary gland involution. The polypeptide is Proton-coupled zinc antiporter SLC30A2 (Rattus norvegicus (Rat)).